The primary structure comprises 319 residues: Ribosomal RNA large subunit methyltransferase F (319 aa).

Belongs to the methyltransferase superfamily. METTL16/RlmF family.

It is found in the cytoplasm. It catalyses the reaction adenosine(1618) in 23S rRNA + S-adenosyl-L-methionine = N(6)-methyladenosine(1618) in 23S rRNA + S-adenosyl-L-homocysteine + H(+). Its function is as follows. Specifically methylates the adenine in position 1618 of 23S rRNA. This chain is Ribosomal RNA large subunit methyltransferase F, found in Aliivibrio fischeri (strain ATCC 700601 / ES114) (Vibrio fischeri).